A 210-amino-acid polypeptide reads, in one-letter code: Large ribosomal subunit protein bL25 (210 aa).

A disordered region spans residues 186-210 (ISSASTEKEAESNQESTSTTPSSES). The span at 198–210 (NQESTSTTPSSES) shows a compositional bias: low complexity.

This sequence belongs to the bacterial ribosomal protein bL25 family. CTC subfamily. In terms of assembly, part of the 50S ribosomal subunit; part of the 5S rRNA/L5/L18/L25 subcomplex. Contacts the 5S rRNA. Binds to the 5S rRNA independently of L5 and L18.

In terms of biological role, this is one of the proteins that binds to the 5S RNA in the ribosome where it forms part of the central protuberance. In Ehrlichia chaffeensis (strain ATCC CRL-10679 / Arkansas), this protein is Large ribosomal subunit protein bL25.